The following is a 219-amino-acid chain: Probable GTP-binding protein EngB (219 aa).

Residues 24–207 (VQPEIAFAGR…HALIESWVRP (184 aa)) form the EngB-type G domain. GTP contacts are provided by residues 32–39 (GRSNAGKS), 59–63 (GRTQH), 81–84 (DLPG), 148–151 (TKCD), and 186–188 (FSA). Mg(2+) contacts are provided by serine 39 and threonine 61.

This sequence belongs to the TRAFAC class TrmE-Era-EngA-EngB-Septin-like GTPase superfamily. EngB GTPase family. It depends on Mg(2+) as a cofactor.

Its function is as follows. Necessary for normal cell division and for the maintenance of normal septation. The polypeptide is Probable GTP-binding protein EngB (Burkholderia multivorans (strain ATCC 17616 / 249)).